Reading from the N-terminus, the 90-residue chain is Acylphosphatase (90 aa).

Positions 5–90 constitute an Acylphosphatase-like domain; the sequence is SFVVHVWGQV…PPQKGGFHTN (86 aa). Active-site residues include arginine 20 and asparagine 38.

The protein belongs to the acylphosphatase family.

It carries out the reaction an acyl phosphate + H2O = a carboxylate + phosphate + H(+). This Aeromonas salmonicida (strain A449) protein is Acylphosphatase (acyP).